A 275-amino-acid chain; its full sequence is Undecaprenyl-diphosphatase (275 aa).

Transmembrane regions (helical) follow at residues 8-28, 45-65, 92-112, 119-139, 197-217, 225-245, and 255-275; these read WTIV…PIPI, ARGL…VLII, FMFV…GVLF, FIGE…AAAI, FSFL…IPNI, ELWI…YFAL, and GNLK…LIFL.

This sequence belongs to the UppP family.

Its subcellular location is the cell membrane. It carries out the reaction di-trans,octa-cis-undecaprenyl diphosphate + H2O = di-trans,octa-cis-undecaprenyl phosphate + phosphate + H(+). Its function is as follows. Catalyzes the dephosphorylation of undecaprenyl diphosphate (UPP). Confers resistance to bacitracin. The chain is Undecaprenyl-diphosphatase from Oceanobacillus iheyensis (strain DSM 14371 / CIP 107618 / JCM 11309 / KCTC 3954 / HTE831).